Here is a 72-residue protein sequence, read N- to C-terminus: MRRSFYHYLMTLKGPAKDSETDFANEAAKDIQFPKQTEDYHELSSYLEMNADYLSNMDIFDELWEKYLENNK.

This sequence belongs to the UPF0346 family.

The chain is UPF0346 protein EF_1680 from Enterococcus faecalis (strain ATCC 700802 / V583).